We begin with the raw amino-acid sequence, 191 residues long: Cell division protein SepF (191 aa).

Positions Phe-153–Pro-178 are enriched in polar residues. The interval Phe-153–Asn-191 is disordered.

The protein belongs to the SepF family. In terms of assembly, homodimer. Interacts with FtsZ.

The protein resides in the cytoplasm. In terms of biological role, cell division protein that is part of the divisome complex and is recruited early to the Z-ring. Probably stimulates Z-ring formation, perhaps through the cross-linking of FtsZ protofilaments. Its function overlaps with FtsA. In Prochlorococcus marinus subsp. pastoris (strain CCMP1986 / NIES-2087 / MED4), this protein is Cell division protein SepF.